The primary structure comprises 124 residues: Fluoride-specific ion channel FluC (124 aa).

The next 4 membrane-spanning stretches (helical) occupy residues 3–23 (IIAI…LSIW), 34–54 (YGTL…LVLA), 66–86 (LLIV…SFET), and 100–120 (LYVL…AGVA). G74 and T77 together coordinate Na(+).

The protein belongs to the fluoride channel Fluc/FEX (TC 1.A.43) family.

Its subcellular location is the cell membrane. The enzyme catalyses fluoride(in) = fluoride(out). With respect to regulation, na(+) is not transported, but it plays an essential structural role and its presence is essential for fluoride channel function. In terms of biological role, fluoride-specific ion channel. Important for reducing fluoride concentration in the cell, thus reducing its toxicity. The polypeptide is Fluoride-specific ion channel FluC (Roseiflexus sp. (strain RS-1)).